Here is a 241-residue protein sequence, read N- to C-terminus: DnaA regulatory inactivator Hda (241 aa).

The protein belongs to the DnaA family. HdA subfamily. As to quaternary structure, the active form seems to be an ADP-bound monomer. Forms the RIDA complex (regulatory inactivation of DnaA) of ATP-DnaA, ADP-Hda and the DNA-loaded beta sliding clamp (dnaN).

Functionally, mediates the interaction of DNA replication initiator protein DnaA with DNA polymerase subunit beta sliding clamp (dnaN). Stimulates hydrolysis of ATP-DnaA to ADP-DnaA, rendering DnaA inactive for reinitiation, a process called regulatory inhibition of DnaA or RIDA. The protein is DnaA regulatory inactivator Hda of Salmonella agona (strain SL483).